The primary structure comprises 441 residues: Glutamate--tRNA ligase 1 (441 aa).

The short motif at 8–18 (PSPTGYIHIGN) is the 'HIGH' region element. The 'KMSKS' region signature appears at 239–243 (ALSKR). Lys242 contacts ATP.

This sequence belongs to the class-I aminoacyl-tRNA synthetase family. Glutamate--tRNA ligase type 1 subfamily. As to quaternary structure, monomer.

It localises to the cytoplasm. It carries out the reaction tRNA(Glu) + L-glutamate + ATP = L-glutamyl-tRNA(Glu) + AMP + diphosphate. Its function is as follows. Catalyzes the attachment of glutamate to tRNA(Glu) in a two-step reaction: glutamate is first activated by ATP to form Glu-AMP and then transferred to the acceptor end of tRNA(Glu). The sequence is that of Glutamate--tRNA ligase 1 from Roseobacter denitrificans (strain ATCC 33942 / OCh 114) (Erythrobacter sp. (strain OCh 114)).